Reading from the N-terminus, the 379-residue chain is Cell division protein FtsZ (379 aa).

GTP is bound by residues 18 to 22 (GGGVN), 105 to 107 (GTG), glutamate 136, arginine 140, and aspartate 184.

This sequence belongs to the FtsZ family. As to quaternary structure, homodimer. Polymerizes to form a dynamic ring structure in a strictly GTP-dependent manner. Interacts directly with several other division proteins.

It localises to the cytoplasm. In terms of biological role, essential cell division protein that forms a contractile ring structure (Z ring) at the future cell division site. The regulation of the ring assembly controls the timing and the location of cell division. One of the functions of the FtsZ ring is to recruit other cell division proteins to the septum to produce a new cell wall between the dividing cells. Binds GTP and shows GTPase activity. The chain is Cell division protein FtsZ from Mycobacterium leprae (strain TN).